We begin with the raw amino-acid sequence, 290 residues long: ADP-dependent (S)-NAD(P)H-hydrate dehydratase (290 aa).

A YjeF C-terminal domain is found at Asn-5–Ile-278. Residues Ala-40, Gly-103, and His-152 each contribute to the (6S)-NADPHX site. Gly-218 contributes to the AMP binding site. Asp-219 serves as a coordination point for (6S)-NADPHX.

It belongs to the NnrD/CARKD family. As to quaternary structure, homotetramer. Mg(2+) serves as cofactor.

The catalysed reaction is (6S)-NADHX + ADP = AMP + phosphate + NADH + H(+). It carries out the reaction (6S)-NADPHX + ADP = AMP + phosphate + NADPH + H(+). In terms of biological role, catalyzes the dehydration of the S-form of NAD(P)HX at the expense of ADP, which is converted to AMP. Together with NAD(P)HX epimerase, which catalyzes the epimerization of the S- and R-forms, the enzyme allows the repair of both epimers of NAD(P)HX, a damaged form of NAD(P)H that is a result of enzymatic or heat-dependent hydration. In Streptococcus pneumoniae (strain ATCC BAA-255 / R6), this protein is ADP-dependent (S)-NAD(P)H-hydrate dehydratase.